The primary structure comprises 425 residues: Ribulose bisphosphate carboxylase (425 aa).

Residue Lys153 is the Proton acceptor of the active site. Lys155 contributes to the substrate binding site. Positions 179, 181, and 182 each coordinate Mg(2+). An N6-carboxylysine modification is found at Lys179. Catalysis depends on His269, which acts as the Proton acceptor. Residues Arg270, His302, Ser353–Gly355, and Gln375–Gly378 contribute to the substrate site.

This sequence belongs to the RuBisCO large chain family. Type III subfamily. In terms of assembly, homodimer. In contrast to form I RuBisCO, the form III RuBisCO is composed solely of large subunits. Requires Mg(2+) as cofactor.

The catalysed reaction is 2 (2R)-3-phosphoglycerate + 2 H(+) = D-ribulose 1,5-bisphosphate + CO2 + H2O. The enzyme catalyses D-ribulose 1,5-bisphosphate + O2 = 2-phosphoglycolate + (2R)-3-phosphoglycerate + 2 H(+). Its activity is regulated as follows. Reversibly inhibited by O(2). Its function is as follows. Catalyzes the addition of molecular CO(2) and H(2)O to ribulose 1,5-bisphosphate (RuBP), generating two molecules of 3-phosphoglycerate (3-PGA). Functions in an archaeal AMP degradation pathway, together with AMP phosphorylase and R15P isomerase. In Methanocaldococcus jannaschii (strain ATCC 43067 / DSM 2661 / JAL-1 / JCM 10045 / NBRC 100440) (Methanococcus jannaschii), this protein is Ribulose bisphosphate carboxylase.